Here is a 129-residue protein sequence, read N- to C-terminus: Regulator of ribonuclease activity B (129 aa).

This sequence belongs to the RraB family. Interacts with the C-terminal region of Rne.

It localises to the cytoplasm. Its function is as follows. Globally modulates RNA abundance by binding to RNase E (Rne) and regulating its endonucleolytic activity. Can modulate Rne action in a substrate-dependent manner by altering the composition of the degradosome. In Shewanella denitrificans (strain OS217 / ATCC BAA-1090 / DSM 15013), this protein is Regulator of ribonuclease activity B.